Consider the following 785-residue polypeptide: Penicillin-binding protein 1A (785 aa).

At 1 to 6 (MYKSLF) the chain is on the cytoplasmic side. The helical; Signal-anchor for type II membrane protein transmembrane segment at 7 to 27 (FFLKIFAILILLGCSVTAYII) threads the bilayer. Over 28–785 (YHYSHDLPDY…GISDQSQEIY (758 aa)) the chain is Periplasmic. A transglycosylase region spans residues 49-220 (TRIYSRDGKL…SELNPDKNYS (172 aa)). E87 functions as the Proton donor; for transglycosylase activity in the catalytic mechanism. The transpeptidase stretch occupies residues 398 to 711 (DVIVVEPIKD…SNVVLPIFID (314 aa)). Catalysis depends on S457, which acts as the Acyl-ester intermediate; for transpeptidase activity.

In the N-terminal section; belongs to the glycosyltransferase 51 family. It in the C-terminal section; belongs to the transpeptidase family.

The protein localises to the cell inner membrane. It catalyses the reaction [GlcNAc-(1-&gt;4)-Mur2Ac(oyl-L-Ala-gamma-D-Glu-L-Lys-D-Ala-D-Ala)](n)-di-trans,octa-cis-undecaprenyl diphosphate + beta-D-GlcNAc-(1-&gt;4)-Mur2Ac(oyl-L-Ala-gamma-D-Glu-L-Lys-D-Ala-D-Ala)-di-trans,octa-cis-undecaprenyl diphosphate = [GlcNAc-(1-&gt;4)-Mur2Ac(oyl-L-Ala-gamma-D-Glu-L-Lys-D-Ala-D-Ala)](n+1)-di-trans,octa-cis-undecaprenyl diphosphate + di-trans,octa-cis-undecaprenyl diphosphate + H(+). The enzyme catalyses Preferential cleavage: (Ac)2-L-Lys-D-Ala-|-D-Ala. Also transpeptidation of peptidyl-alanyl moieties that are N-acyl substituents of D-alanine.. It participates in cell wall biogenesis; peptidoglycan biosynthesis. Functionally, cell wall formation. Synthesis of cross-linked peptidoglycan from the lipid intermediates. The enzyme has a penicillin-insensitive transglycosylase N-terminal domain (formation of linear glycan strands) and a penicillin-sensitive transpeptidase C-terminal domain (cross-linking of the peptide subunits). The polypeptide is Penicillin-binding protein 1A (mrcA) (Rickettsia typhi (strain ATCC VR-144 / Wilmington)).